The primary structure comprises 731 residues: Polyribonucleotide nucleotidyltransferase (731 aa).

Mg(2+) is bound by residues D488 and D494. The KH domain maps to 555–614 (PRIEVINIAVDKIRDVIGSGGKVIREIVEQTGAKINIEDDGTIKIASADAKTIEAAKRWI). One can recognise an S1 motif domain in the interval 624 to 692 (GAIYQGTVVK…ERGKVRLSMK (69 aa)). A disordered region spans residues 693–731 (AVDQKTGKEMTDDKSVKEEKCMDEKKQPENKRRRKKKEE). Residues 694-722 (VDQKTGKEMTDDKSVKEEKCMDEKKQPEN) show a composition bias toward basic and acidic residues.

It belongs to the polyribonucleotide nucleotidyltransferase family. Requires Mg(2+) as cofactor.

It is found in the cytoplasm. It carries out the reaction RNA(n+1) + phosphate = RNA(n) + a ribonucleoside 5'-diphosphate. Its function is as follows. Involved in mRNA degradation. Catalyzes the phosphorolysis of single-stranded polyribonucleotides processively in the 3'- to 5'-direction. This Bartonella tribocorum (strain CIP 105476 / IBS 506) protein is Polyribonucleotide nucleotidyltransferase.